We begin with the raw amino-acid sequence, 278 residues long: MEKGLLLESVSYQYDANAAPVLKEIDIHVPLGEWVAVIGPNGSGKSTLAKLLNGLLLPTSGRVTFNGMSTMDEGTHWEIRQQVGLVFQNPEHQFVATTVRDDLAFGMENRGFPREKMIQRIEEVSIQVGIDHLLDEEPHRLSGGQKQRVAIAGILAVEPSVIVFDEATSMLDPQGRKDVLETMKQLHENGMTIISITHDVNEASQAGRVLLLEKGEVMLDGSPAVVFHEQDKLEAAGIDRPFAYQLQLALQSRGIQLEGALLKKEELVEALWKYKSSN.

Residues 5 to 239 form the ABC transporter domain; that stretch reads LLLESVSYQY…QDKLEAAGID (235 aa). 39 to 46 contributes to the ATP binding site; it reads GPNGSGKS.

This sequence belongs to the ABC transporter superfamily. Energy-coupling factor EcfA family. In terms of assembly, forms a stable energy-coupling factor (ECF) transporter complex composed of 2 membrane-embedded substrate-binding proteins (S component), 2 ATP-binding proteins (A component) and 2 transmembrane proteins (T component).

It localises to the cell membrane. ATP-binding (A) component of a common energy-coupling factor (ECF) ABC-transporter complex. Unlike classic ABC transporters this ECF transporter provides the energy necessary to transport a number of different substrates. This chain is Energy-coupling factor transporter ATP-binding protein EcfA1, found in Halalkalibacterium halodurans (strain ATCC BAA-125 / DSM 18197 / FERM 7344 / JCM 9153 / C-125) (Bacillus halodurans).